A 544-amino-acid polypeptide reads, in one-letter code: Putative ankyrin repeat protein L289 (544 aa).

ANK repeat units lie at residues 31–71, 72–105, 110–143, 147–181, 185–218, 222–255, 259–297, 300–339, 340–374, 378–413, and 414–447; these read KNFS…AQNE, HGWTALMIASILSNDWSSIKTVKLLLKKGADPNI, YSQTVLKLAASNVKYASNIKTIKLLIHYGADINH, LGVSVLHYCYIDYYTKSDNLEVIKLLLSYGMDINS, QGNTLLYIVSKVSQNNNSTETVKFLLENNADPNI, KGTTALMVASKYSNSTSNLATVKLLLDYEANINF, YNETALSKVVSNFYESNYNKNNFMTLKFLIQKGAIDIPI, DKLSILMVAVIRTYCSENSDNFTKLIELLLKHFNPNIQCS, NGKTVLHYLCNKQVCNFPYVDVINLLLKAGINPNI, QGKTALILACDNYCFLKNKEAVRLLCKVSTINTIDN, and TGQSALDYFLNKYKEKYTNILTIILKYGAYCVNK.

This chain is Putative ankyrin repeat protein L289, found in Acanthamoeba polyphaga mimivirus (APMV).